The sequence spans 231 residues: Dephospho-CoA kinase (231 aa).

In terms of domain architecture, DPCK spans 29–231 (RVGLTGGIAS…IAGALRFDRR (203 aa)). Residue 37 to 42 (ASGKST) participates in ATP binding.

The protein belongs to the CoaE family.

It localises to the cytoplasm. The catalysed reaction is 3'-dephospho-CoA + ATP = ADP + CoA + H(+). Its pathway is cofactor biosynthesis; coenzyme A biosynthesis; CoA from (R)-pantothenate: step 5/5. Its function is as follows. Catalyzes the phosphorylation of the 3'-hydroxyl group of dephosphocoenzyme A to form coenzyme A. The sequence is that of Dephospho-CoA kinase from Cutibacterium acnes (strain DSM 16379 / KPA171202) (Propionibacterium acnes).